Consider the following 374-residue polypeptide: ORC1-type DNA replication protein 6 (374 aa).

ATP contacts are provided by residues 66–70 (TGKTT), Tyr-209, and Arg-221.

The protein belongs to the CDC6/cdc18 family.

Functionally, involved in regulation of DNA replication. The sequence is that of ORC1-type DNA replication protein 6 (orc6) from Halobacterium salinarum (strain ATCC 700922 / JCM 11081 / NRC-1) (Halobacterium halobium).